Consider the following 98-residue polypeptide: Sarcosine oxidase subunit delta (98 aa).

Zn(2+)-binding residues include C6, C9, H59, and C63.

It belongs to the SoxD family. As to quaternary structure, heterotetramer composed of subunits alpha (SoxA), beta (SoxB), gamma (SoxG) and delta (SoxD).

The protein resides in the cytoplasm. The enzyme catalyses sarcosine + (6S)-5,6,7,8-tetrahydrofolate + O2 = (6R)-5,10-methylene-5,6,7,8-tetrahydrofolate + glycine + H2O2. It carries out the reaction sarcosine + O2 + H2O = formaldehyde + glycine + H2O2. Functionally, in the presence of tetrahydrofolate, catalyzes the oxidative demethylation of sarcosine to yield glycine, 5,10-methylenetetrahydrofolate and hydrogen peroxide. In the absence of tetrahydrofolate, catalyzes the oxidative demethylation of sarcosine to yield glycine, formaldehyde and hydrogen peroxide. The polypeptide is Sarcosine oxidase subunit delta (Corynebacterium sp. (strain P-1)).